The primary structure comprises 260 residues: Isoprenyl transferase (260 aa).

Aspartate 40 is an active-site residue. Residue aspartate 40 coordinates Mg(2+). Substrate-binding positions include 41-44 (GNGR), tryptophan 45, arginine 53, histidine 57, and 85-87 (STE). Asparagine 88 functions as the Proton acceptor in the catalytic mechanism. Substrate contacts are provided by residues tryptophan 89, arginine 91, arginine 208, and 214 to 216 (RLS). Glutamate 227 provides a ligand contact to Mg(2+).

It belongs to the UPP synthase family. Homodimer. It depends on Mg(2+) as a cofactor.

Functionally, catalyzes the condensation of isopentenyl diphosphate (IPP) with allylic pyrophosphates generating different type of terpenoids. The polypeptide is Isoprenyl transferase (Bacillus subtilis (strain 168)).